We begin with the raw amino-acid sequence, 584 residues long: Membrane protein insertase YidC (584 aa).

A run of 5 helical transmembrane segments spans residues 5–25, 358–378, 428–448, 478–498, and 516–536; these read SVIG…FMAP, FIGN…LVTY, LGGC…FYVF, IPLY…AVFL, and IYIF…GLGL. The tract at residues 563–584 is disordered; sequence ALSPVVAAPPKAPKKKKNARKR. The span at 574–584 shows a compositional bias: basic residues; that stretch reads APKKKKNARKR.

It belongs to the OXA1/ALB3/YidC family. Type 1 subfamily. Interacts with the Sec translocase complex via SecD. Specifically interacts with transmembrane segments of nascent integral membrane proteins during membrane integration.

It localises to the cell inner membrane. Its function is as follows. Required for the insertion and/or proper folding and/or complex formation of integral membrane proteins into the membrane. Involved in integration of membrane proteins that insert both dependently and independently of the Sec translocase complex, as well as at least some lipoproteins. Aids folding of multispanning membrane proteins. The sequence is that of Membrane protein insertase YidC from Prosthecochloris aestuarii (strain DSM 271 / SK 413).